A 108-amino-acid chain; its full sequence is MILQRLFRFSSVIRSAVSVHLRRNIGVTAVAFNKELDPIQKLFVDKIREYKSKRQTSGGPVDASSEYQQELERELFKLKQMFGNADMNTFPTFKFEDPKFEVIEKPQA.

A mitochondrion-targeting transit peptide spans 1 to 32 (MILQRLFRFSSVIRSAVSVHLRRNIGVTAVAF). N6-acetyllysine occurs at positions 41 and 46. At S65 the chain carries Phosphoserine. K79 bears the N6-acetyllysine mark. K94 and K99 each carry N6-acetyllysine; alternate. N6-succinyllysine; alternate is present on residues K94 and K99. K105 is modified (N6-acetyllysine).

It belongs to the eukaryotic ATPase subunit F6 family. As to quaternary structure, component of the ATP synthase complex composed at least of ATP5F1A/subunit alpha, ATP5F1B/subunit beta, ATP5MC1/subunit c (homooctomer), MT-ATP6/subunit a, MT-ATP8/subunit 8, ATP5ME/subunit e, ATP5MF/subunit f, ATP5MG/subunit g, ATP5MK/subunit k, ATP5MJ/subunit j, ATP5F1C/subunit gamma, ATP5F1D/subunit delta, ATP5F1E/subunit epsilon, ATP5PF/subunit F6, ATP5PB/subunit b, ATP5PD/subunit d, ATP5PO/subunit OSCP. ATP synthase complex consists of a soluble F(1) head domain (subunits alpha(3) and beta(3)) - the catalytic core - and a membrane F(0) domain - the membrane proton channel (subunits c, a, 8, e, f, g, k and j). These two domains are linked by a central stalk (subunits gamma, delta, and epsilon) rotating inside the F1 region and a stationary peripheral stalk (subunits F6, b, d, and OSCP).

The protein resides in the mitochondrion. The protein localises to the mitochondrion inner membrane. Its function is as follows. Subunit F6, of the mitochondrial membrane ATP synthase complex (F(1)F(0) ATP synthase or Complex V) that produces ATP from ADP in the presence of a proton gradient across the membrane which is generated by electron transport complexes of the respiratory chain. ATP synthase complex consist of a soluble F(1) head domain - the catalytic core - and a membrane F(1) domain - the membrane proton channel. These two domains are linked by a central stalk rotating inside the F(1) region and a stationary peripheral stalk. During catalysis, ATP synthesis in the catalytic domain of F(1) is coupled via a rotary mechanism of the central stalk subunits to proton translocation. In vivo, can only synthesize ATP although its ATP hydrolase activity can be activated artificially in vitro. Part of the complex F(0) domain. Part of the complex F(0) domain and the peripheric stalk, which acts as a stator to hold the catalytic alpha(3)beta(3) subcomplex and subunit a/ATP6 static relative to the rotary elements. The sequence is that of ATP synthase peripheral stalk subunit F6, mitochondrial from Homo sapiens (Human).